The chain runs to 252 residues: MAGHSKFKNIQYRKGAQDKKRAKIFTKLIREIVTAAKTGSSNNPENNPRLRNALTAARSQNLPKERIDKAINSANDASNTENYMEIRYEGYAPSGIAIIVEALTDNKNRTAAEVRSSFTKYGGSLGETGSVNYLFKHCGVIQYLSNIVSSENILEAVMEVDVDDITSDDTIHTIYTDIENFSKVLEFLTGKYGIPEDSYIGWIPLNTIIIDDKEKAEKLLKLVEVLEESDDVQRVFSNYELSDDVYAIIQGA.

The protein belongs to the TACO1 family.

It localises to the cytoplasm. The protein is Probable transcriptional regulatory protein A1E_02520 of Rickettsia canadensis (strain McKiel).